Here is a 288-residue protein sequence, read N- to C-terminus: Ribosome biogenesis GTPase A (288 aa).

Positions 14–179 (RRQVTEKLKL…LLDTPGILWP (166 aa)) constitute a CP-type G domain. GTP-binding positions include 58–61 (NKVD), 131–136 (NVGKST), and glycine 175.

It belongs to the TRAFAC class YlqF/YawG GTPase family. MTG1 subfamily. Interacts with ctc. Interacts with the immature 50S ribosome subunit. 2 molecules of rbgA bind to one 50S subunit.

It is found in the cytoplasm. In terms of biological role, essential protein that is required for a late step of 50S ribosomal subunit assembly. Has GTPase activity that is stimulated by interaction with the immature 50S ribosome subunit. Binds to the 23S rRNA. Required for the association of ribosomal proteins rplP and rpmA with the large subunit. This chain is Ribosome biogenesis GTPase A, found in Priestia megaterium (strain DSM 319 / IMG 1521) (Bacillus megaterium).